A 309-amino-acid polypeptide reads, in one-letter code: DNA-directed RNA polymerase subunit alpha (309 aa).

The alpha N-terminal domain (alpha-NTD) stretch occupies residues 1–227 (MTFQVECVES…ALFEPLKNVS (227 aa)). An alpha C-terminal domain (alpha-CTD) region spans residues 237–309 (EPTPESQTPI…GIKLQESKVS (73 aa)).

It belongs to the RNA polymerase alpha chain family. As to quaternary structure, in cyanobacteria the RNAP catalytic core is composed of 2 alpha, 1 beta, 1 beta', 1 gamma and 1 omega subunit. When a sigma factor is associated with the core the holoenzyme is formed, which can initiate transcription.

It carries out the reaction RNA(n) + a ribonucleoside 5'-triphosphate = RNA(n+1) + diphosphate. In terms of biological role, DNA-dependent RNA polymerase catalyzes the transcription of DNA into RNA using the four ribonucleoside triphosphates as substrates. The polypeptide is DNA-directed RNA polymerase subunit alpha (Synechococcus elongatus (strain ATCC 33912 / PCC 7942 / FACHB-805) (Anacystis nidulans R2)).